The chain runs to 162 residues: UPF0303 protein RL3365 (162 aa).

Belongs to the UPF0303 family.

In Rhizobium johnstonii (strain DSM 114642 / LMG 32736 / 3841) (Rhizobium leguminosarum bv. viciae), this protein is UPF0303 protein RL3365.